Here is a 168-residue protein sequence, read N- to C-terminus: Cyclin-dependent kinase 4 inhibitor C (168 aa).

ANK repeat units lie at residues 4-33 (PWGN…NVNA), 37-65 (FGRT…NPNL), 69-98 (TGFA…DVNI), 102-132 (EGNL…NVGH), and 136-165 (KGDT…GGAT).

Belongs to the CDKN2 cyclin-dependent kinase inhibitor family. In terms of assembly, heterodimer of p18 with CDK6.

In terms of biological role, interacts strongly with CDK6, weakly with CDK4. Inhibits cell growth and proliferation with a correlated dependence on endogenous retinoblastoma protein RB. The protein is Cyclin-dependent kinase 4 inhibitor C (Cdkn2c) of Mus musculus (Mouse).